The sequence spans 657 residues: UvrABC system protein B (657 aa).

Residues 23–414 (KSIKKGNKYQ…KENIFHQIMR (392 aa)) form the Helicase ATP-binding domain. 36 to 43 (GVTGSGKT) serves as a coordination point for ATP. Residues 89 to 112 (YYDYYQPEAYIPRTDVFIEKDSST) carry the Beta-hairpin motif. Residues 431–593 (QVEILFDEAK…ITPTSVKRHI (163 aa)) enclose the Helicase C-terminal domain. The region spanning 622–657 (AKLVKELRKQMLEAAKALEFEKAAAIRDEINKLRDL) is the UVR domain.

The protein belongs to the UvrB family. As to quaternary structure, forms a heterotetramer with UvrA during the search for lesions. Interacts with UvrC in an incision complex.

It is found in the cytoplasm. Functionally, the UvrABC repair system catalyzes the recognition and processing of DNA lesions. A damage recognition complex composed of 2 UvrA and 2 UvrB subunits scans DNA for abnormalities. Upon binding of the UvrA(2)B(2) complex to a putative damaged site, the DNA wraps around one UvrB monomer. DNA wrap is dependent on ATP binding by UvrB and probably causes local melting of the DNA helix, facilitating insertion of UvrB beta-hairpin between the DNA strands. Then UvrB probes one DNA strand for the presence of a lesion. If a lesion is found the UvrA subunits dissociate and the UvrB-DNA preincision complex is formed. This complex is subsequently bound by UvrC and the second UvrB is released. If no lesion is found, the DNA wraps around the other UvrB subunit that will check the other stand for damage. The polypeptide is UvrABC system protein B (Campylobacter jejuni subsp. jejuni serotype O:2 (strain ATCC 700819 / NCTC 11168)).